We begin with the raw amino-acid sequence, 350 residues long: tRNA uridine(34) hydroxylase (350 aa).

One can recognise a Rhodanese domain in the interval 146–240; it reads DDPDALFIDM…YARKAREQGL (95 aa). Cysteine 200 acts as the Cysteine persulfide intermediate in catalysis.

This sequence belongs to the TrhO family.

It catalyses the reaction uridine(34) in tRNA + AH2 + O2 = 5-hydroxyuridine(34) in tRNA + A + H2O. Catalyzes oxygen-dependent 5-hydroxyuridine (ho5U) modification at position 34 in tRNAs, the first step in 5-carboxymethoxyuridine (cmo5U) biosynthesis. May be part of an alternate pathway, which is able to bypass cmo5U biogenesis in a subset of tRNAs under aerobic conditions. This is tRNA uridine(34) hydroxylase from Escherichia coli (strain K12).